The chain runs to 783 residues: Protein phosphatase 2C 29 (783 aa).

The tract at residues 151-194 is disordered; it reads SFSALPLQPGPDRSGLFMSGPIERGATSGPLDPPAGEISRSNSA. Ser-199 carries the post-translational modification Phosphoserine. The PPM-type phosphatase domain maps to 260-770; the sequence is SSGENDLQWA…DDCTVLVIAL (511 aa). Mn(2+) is bound by residues Asp-295 and Gly-296. The interval 555–595 is disordered; that stretch reads ETGESVETAERVEERRNDLDRDDGNKEPLVVDSSDSTVNNE. The segment covering 562-580 has biased composition (basic and acidic residues); sequence TAERVEERRNDLDRDDGNK. Mn(2+) contacts are provided by Asp-701 and Asp-761.

Belongs to the PP2C family. Mg(2+) serves as cofactor. It depends on Mn(2+) as a cofactor. In terms of tissue distribution, expressed in roots, leaves, stems, inflorescences, flowers and developing vascular tissue.

Its subcellular location is the nucleus. The catalysed reaction is O-phospho-L-seryl-[protein] + H2O = L-seryl-[protein] + phosphate. It catalyses the reaction O-phospho-L-threonyl-[protein] + H2O = L-threonyl-[protein] + phosphate. Involved in the regulation of pedicel length and of CLAVATA pathways controlling stem cell identity at shoot and flower meristems. The chain is Protein phosphatase 2C 29 (PLL1) from Arabidopsis thaliana (Mouse-ear cress).